The following is a 332-amino-acid chain: Biotin synthase (332 aa).

The 230-residue stretch at 53 to 282 (YFGKKVKLNM…TKEIRISGGR (230 aa)) folds into the Radical SAM core domain. 3 residues coordinate [4Fe-4S] cluster: C71, C75, and C78. Residues C115, C147, C207, and R277 each coordinate [2Fe-2S] cluster.

Belongs to the radical SAM superfamily. Biotin synthase family. As to quaternary structure, homodimer. [4Fe-4S] cluster is required as a cofactor. The cofactor is [2Fe-2S] cluster.

The catalysed reaction is (4R,5S)-dethiobiotin + (sulfur carrier)-SH + 2 reduced [2Fe-2S]-[ferredoxin] + 2 S-adenosyl-L-methionine = (sulfur carrier)-H + biotin + 2 5'-deoxyadenosine + 2 L-methionine + 2 oxidized [2Fe-2S]-[ferredoxin]. It participates in cofactor biosynthesis; biotin biosynthesis; biotin from 7,8-diaminononanoate: step 2/2. Functionally, catalyzes the conversion of dethiobiotin (DTB) to biotin by the insertion of a sulfur atom into dethiobiotin via a radical-based mechanism. The protein is Biotin synthase of Bacillus thuringiensis (strain Al Hakam).